The primary structure comprises 762 residues: Subtilisin-like protease SBT3.11 (762 aa).

The signal sequence occupies residues methionine 1–alanine 16. Residues valine 17–glutamine 116 constitute a propeptide, activation peptide. The Inhibitor I9 domain maps to valine 37–leucine 115. The 490-residue stretch at threonine 120–alanine 609 folds into the Peptidase S8 domain. Aspartate 150 (charge relay system) is an active-site residue. Asparagine 206 carries N-linked (GlcNAc...) asparagine glycosylation. The active-site Charge relay system is histidine 226. Residues asparagine 241 and asparagine 371 are each glycosylated (N-linked (GlcNAc...) asparagine). Serine 540 serves as the catalytic Charge relay system.

This sequence belongs to the peptidase S8 family.

It localises to the secreted. This is Subtilisin-like protease SBT3.11 from Arabidopsis thaliana (Mouse-ear cress).